The chain runs to 383 residues: Hippurate hydrolase (383 aa).

Belongs to the peptidase M20 family.

The catalysed reaction is N-benzoylglycine + H2O = benzoate + glycine. Functionally, cleaves hippuric acid into benzoic acid and glycine. The sequence is that of Hippurate hydrolase from Campylobacter jejuni subsp. jejuni serotype O:2 (strain ATCC 700819 / NCTC 11168).